Consider the following 520-residue polypeptide: MENIEKLLMQEKILMLELDLVRAKISLARANGSSQQGDLSLHRETPEKEEAVHSALATFTPSQVKAIPEQTAPGKESTNPLMANILPKDMNSVQTEIRPVKPSDFLRPHQGIPIPPKPEPSSSVAPLRDESGIQHPHTNYYVVYNGPHAGIYDDWGCTKAATNGVPGVAHKKFATITEARAAADAYTTSQQTDRLNFIPKGEAQLKPKSFAKALTSPPKQKAHWLMLGTKKPSSDPAPKEISFAPEITMDDFLYLYDLVRKFDGEGDDTMFTTDNEKISLFNFRKNANPQMVREAYAAGLIKTIYPSNNLQEIKYLPKKVKDAVKRFRTNCIKNTEKDIFLKIRSTIPVWTIQGLLHKPRQVIEIGVSKKVVPTESKAMESKIQIEDLTELAVKTGEQFIQSLLRLNDKKKIFVNMVEHDTLVYSKNIKDTVSEDQRAIETFQQRVISGNLLGFHCPAICHFIVKIVEKEGGSYKCHHCDKGKAIVEDASADSGPKDGPPPTRSIVEKEDVPTTSSKQVD.

2 disordered regions span residues 103-126 (SDFL…SVAP) and 487-520 (EDAS…KQVD).

Belongs to the caulimoviridae viroplasmin family.

It localises to the host cytoplasm. Functionally, enhances the ribosomal termination-reinitiation event leading to the translation of major open reading frames on the polycistronic viral RNAs. The chain is Transactivator/viroplasmin protein from Arabidopsis thaliana (Mouse-ear cress).